The sequence spans 268 residues: Ubiquinone biosynthesis protein COQ4 homolog, mitochondrial (268 aa).

4 residues coordinate Zn(2+): H171, D172, H175, and E187.

The protein belongs to the COQ4 family. In terms of assembly, component of a multi-subunit COQ enzyme complex. Requires Zn(2+) as cofactor.

The protein resides in the mitochondrion inner membrane. It carries out the reaction a 4-hydroxy-3-methoxy-5-(all-trans-polyprenyl)benzoate + H(+) = a 2-methoxy-6-(all-trans-polyprenyl)phenol + CO2. Its pathway is cofactor biosynthesis; ubiquinone biosynthesis. Functionally, lyase that catalyzes the C1-decarboxylation of 4-hydroxy-3-methoxy-5-(all-trans-polyprenyl)benzoic acid into 2-methoxy-6-(all-trans-polyprenyl)phenol during ubiquinone biosynthesis. The polypeptide is Ubiquinone biosynthesis protein COQ4 homolog, mitochondrial (Drosophila melanogaster (Fruit fly)).